A 153-amino-acid chain; its full sequence is uncharacterized protein (153 aa).

A signal peptide spans 1–22 (MKLLKKGTTVLFVMIMAVMLVA). Cys23 carries the N-palmitoyl cysteine lipid modification. Cys23 carries S-diacylglycerol cysteine lipidation. The disordered stretch occupies residues 121–153 (LPGMASTGDVSKGISMKESEKMLKSQGFKEVEK). Basic and acidic residues predominate over residues 135 to 153 (SMKESEKMLKSQGFKEVEK).

To E.coli YehR.

The protein localises to the cell membrane. This is an uncharacterized protein from Listeria innocua serovar 6a (strain ATCC BAA-680 / CLIP 11262).